We begin with the raw amino-acid sequence, 264 residues long: Probable metallo-hydrolase YflN (264 aa).

Zn(2+)-binding residues include His-80, His-82, Asp-84, His-85, His-169, Asp-188, and His-241.

Belongs to the metallo-beta-lactamase superfamily. Zn(2+) is required as a cofactor.

This is Probable metallo-hydrolase YflN (yflN) from Bacillus subtilis (strain 168).